The sequence spans 336 residues: Probable ADP-ribosylation factor GTPase-activating protein AGD13 (336 aa).

The Arf-GAP domain occupies K15–T137. The C4-type zinc-finger motif lies at C30–C53. The 119-residue stretch at R162–F280 folds into the C2 domain. Residues D249, S252, and D255 each contribute to the Ca(2+) site.

It depends on Ca(2+) as a cofactor.

In terms of biological role, GTPase-activating protein (GAP) for ADP ribosylation factor (ARF). In Arabidopsis thaliana (Mouse-ear cress), this protein is Probable ADP-ribosylation factor GTPase-activating protein AGD13 (AGD13).